A 278-amino-acid chain; its full sequence is Shikimate dehydrogenase (NADP(+)) (278 aa).

Residues 18–20 (SRS) and threonine 65 each bind shikimate. Lysine 69 functions as the Proton acceptor in the catalytic mechanism. Glutamate 80 contributes to the NADP(+) binding site. The shikimate site is built by asparagine 89 and aspartate 104. Residues 129–133 (GAGGS) and leucine 218 contribute to the NADP(+) site. Shikimate is bound at residue tyrosine 220. Residue glycine 241 coordinates NADP(+).

Belongs to the shikimate dehydrogenase family. Homodimer.

The enzyme catalyses shikimate + NADP(+) = 3-dehydroshikimate + NADPH + H(+). It functions in the pathway metabolic intermediate biosynthesis; chorismate biosynthesis; chorismate from D-erythrose 4-phosphate and phosphoenolpyruvate: step 4/7. In terms of biological role, involved in the biosynthesis of the chorismate, which leads to the biosynthesis of aromatic amino acids. Catalyzes the reversible NADPH linked reduction of 3-dehydroshikimate (DHSA) to yield shikimate (SA). This chain is Shikimate dehydrogenase (NADP(+)), found in Rhodopseudomonas palustris (strain ATCC BAA-98 / CGA009).